The chain runs to 190 residues: Xanthine phosphoribosyltransferase (190 aa).

Leu20 and Asn27 together coordinate xanthine. Residue 128–132 (ANGKA) participates in 5-phospho-alpha-D-ribose 1-diphosphate binding. Lys156 is a xanthine binding site.

Belongs to the purine/pyrimidine phosphoribosyltransferase family. Xpt subfamily. Homodimer.

The protein localises to the cytoplasm. It carries out the reaction XMP + diphosphate = xanthine + 5-phospho-alpha-D-ribose 1-diphosphate. It functions in the pathway purine metabolism; XMP biosynthesis via salvage pathway; XMP from xanthine: step 1/1. Converts the preformed base xanthine, a product of nucleic acid breakdown, to xanthosine 5'-monophosphate (XMP), so it can be reused for RNA or DNA synthesis. The sequence is that of Xanthine phosphoribosyltransferase from Pseudomonas fluorescens (strain ATCC BAA-477 / NRRL B-23932 / Pf-5).